The chain runs to 589 residues: Proton pump-interactor 2 (589 aa).

The stretch at 205–245 (EDSLAEKEASINRVKSMAVELNEVKKELDAITWKINHLSDK) forms a coiled coil. 4 stretches are compositionally biased toward basic and acidic residues: residues 370–383 (KGGEKVHETNREDS), 395–408 (TDKRKKETRKKAMD), 426–450 (VYEKPKKEEEEVDEETLKEREREEQ), and 504–534 (ESDHSQEVTKDLEKVRTLAVSGKEKHQKERS). Disordered regions lie at residues 370–450 (KGGE…REEQ) and 485–534 (KECE…KERS). A coiled-coil region spans residues 431–500 (KKEEEEVDEE…AKKKAAANSS (70 aa)). A helical membrane pass occupies residues 568 to 588 (WVWGLSSAALAVALFLVVLLL).

This sequence belongs to the plant Proton pump-interactor protein family. Expressed in seedlings and flowers.

Its subcellular location is the cell membrane. It is found in the endoplasmic reticulum membrane. In terms of biological role, may regulate plasma membrane ATPase activity. The chain is Proton pump-interactor 2 (PPI2) from Arabidopsis thaliana (Mouse-ear cress).